Reading from the N-terminus, the 223-residue chain is Uracil-DNA glycosylase (223 aa).

Catalysis depends on aspartate 61, which acts as the Proton acceptor.

This sequence belongs to the uracil-DNA glycosylase (UDG) superfamily. UNG family.

The protein localises to the cytoplasm. The enzyme catalyses Hydrolyzes single-stranded DNA or mismatched double-stranded DNA and polynucleotides, releasing free uracil.. Its function is as follows. Excises uracil residues from the DNA which can arise as a result of misincorporation of dUMP residues by DNA polymerase or due to deamination of cytosine. This chain is Uracil-DNA glycosylase, found in Histophilus somni (strain 129Pt) (Haemophilus somnus).